Here is a 197-residue protein sequence, read N- to C-terminus: Imidazoleglycerol-phosphate dehydratase (197 aa).

It belongs to the imidazoleglycerol-phosphate dehydratase family.

It is found in the cytoplasm. The enzyme catalyses D-erythro-1-(imidazol-4-yl)glycerol 3-phosphate = 3-(imidazol-4-yl)-2-oxopropyl phosphate + H2O. Its pathway is amino-acid biosynthesis; L-histidine biosynthesis; L-histidine from 5-phospho-alpha-D-ribose 1-diphosphate: step 6/9. In Rhodopseudomonas palustris (strain BisB5), this protein is Imidazoleglycerol-phosphate dehydratase.